Consider the following 156-residue polypeptide: MPRKGHVERREVLPDPVYNSKKVSKLINKVMWDGKKSLAQKICYGAFDIIREKTGRDPLEVFEEALNNVMPVLEVRPRRVGGATYQVPVEVRPERRLSLGIRWLVEYARQRSGKSMMEKLAAEIMDAANNTGGSVKKKEDTHKMAEANKAFAHYRW.

It belongs to the universal ribosomal protein uS7 family. In terms of assembly, part of the 30S ribosomal subunit. Contacts proteins S9 and S11.

One of the primary rRNA binding proteins, it binds directly to 16S rRNA where it nucleates assembly of the head domain of the 30S subunit. Is located at the subunit interface close to the decoding center, probably blocks exit of the E-site tRNA. The chain is Small ribosomal subunit protein uS7 from Thermoanaerobacter pseudethanolicus (strain ATCC 33223 / 39E) (Clostridium thermohydrosulfuricum).